Consider the following 725-residue polypeptide: Catalase B (725 aa).

A signal peptide spans 1–15 (MRALSLASLIGIASA). Positions 16–27 (ACPYMTGELERR) are excised as a propeptide. An N-linked (GlcNAc...) asparagine glycan is attached at asparagine 50. Histidine 101 is an active-site residue. N-linked (GlcNAc...) asparagine glycosylation occurs at asparagine 119. Asparagine 174 is a catalytic residue. Tyrosine 388 contacts heme. 3 N-linked (GlcNAc...) asparagine glycosylation sites follow: asparagine 447, asparagine 550, and asparagine 645.

Belongs to the catalase family. Homotetramer. Requires heme as cofactor.

The protein localises to the secreted. It catalyses the reaction 2 H2O2 = O2 + 2 H2O. Occurs in almost all aerobically respiring organisms and serves to protect cells from the toxic effects of hydrogen peroxide through its degradation into water and oxygen. The polypeptide is Catalase B (catB) (Aspergillus oryzae (strain ATCC 42149 / RIB 40) (Yellow koji mold)).